Reading from the N-terminus, the 505-residue chain is RNA-splicing ligase RtcB homolog (505 aa).

Positions 119, 122, 227, and 259 each coordinate Mn(2+). 226 to 230 (NHYAE) contacts GMP. Residue serine 300 is modified to Phosphoserine. Residue histidine 353 participates in Mn(2+) binding. GMP contacts are provided by residues 353–354 (HN), 402–405 (GGTM), serine 409, and 428–431 (HGAG). The GMP-histidine intermediate role is filled by histidine 428. Residue lysine 496 forms a Glycyl lysine isopeptide (Lys-Gly) (interchain with G-Cter in SUMO2) linkage. Lysine 504 lines the GMP pocket.

Belongs to the RtcB family. In terms of assembly, catalytic component of the tRNA-splicing ligase complex. Requires Mn(2+) as cofactor.

The protein localises to the nucleus. It is found in the cytoplasm. It carries out the reaction a 3'-end 3'-phospho-ribonucleotide-RNA + a 5'-end dephospho-ribonucleoside-RNA + GTP = a ribonucleotidyl-ribonucleotide-RNA + GMP + diphosphate. The enzyme catalyses a 3'-end 2',3'-cyclophospho-ribonucleotide-RNA + a 5'-end dephospho-ribonucleoside-RNA + GTP + H2O = a ribonucleotidyl-ribonucleotide-RNA + GMP + diphosphate + H(+). In terms of biological role, catalytic subunit of the tRNA-splicing ligase complex that acts by directly joining spliced tRNA halves to mature-sized tRNAs by incorporating the precursor-derived splice junction phosphate into the mature tRNA as a canonical 3',5'-phosphodiester. May act as an RNA ligase with broad substrate specificity, and may function toward other RNAs. This chain is RNA-splicing ligase RtcB homolog, found in Bos taurus (Bovine).